Reading from the N-terminus, the 215-residue chain is Large ribosomal subunit protein uL4 (215 aa).

A disordered region spans residues 43 to 100; sequence AAKRQGTHSTKTRGEVSGGGKKPYRQKGSGRARQGSTRAPQFTGGGTVHGPKPRDYSQ.

This sequence belongs to the universal ribosomal protein uL4 family. Part of the 50S ribosomal subunit.

Its function is as follows. One of the primary rRNA binding proteins, this protein initially binds near the 5'-end of the 23S rRNA. It is important during the early stages of 50S assembly. It makes multiple contacts with different domains of the 23S rRNA in the assembled 50S subunit and ribosome. Forms part of the polypeptide exit tunnel. The polypeptide is Large ribosomal subunit protein uL4 (Mycolicibacterium smegmatis (Mycobacterium smegmatis)).